The chain runs to 532 residues: Telomerase Cajal body protein 1 (532 aa).

The tract at residues 1–48 is disordered; sequence MKTSEELRLAPDSLPSDLVPAPVLQASPADKNTDSEPVPPPCGGDDQL. Phosphoserine is present on residues serine 27, serine 61, and serine 83. The interval 83 to 115 is disordered; that stretch reads SPRIEEQEVPENASLPVEETNRPELESGEAMEG. WD repeat units lie at residues 151-190, 206-251, 256-297, 307-348, 349-389, and 395-434; these read RSEN…YSES, EGDT…LRAS, NHLD…RDCE, GQSG…ALLG, GHQG…HLLW, and VTTN…SDCK. A Phosphothreonine modification is found at threonine 474. Serine 476 bears the Phosphoserine mark. Residues 505 to 532 are disordered; that stretch reads CGGGPDPSNPDEDQDEKGQGRTEAVGMS.

Belongs to the TCAB1 family. In terms of assembly, component of the telomerase holoenzyme complex composed of one molecule of TERT, one molecule of WRAP53/TCAB1, two molecules of H/ACA ribonucleoprotein complex subunits DKC1, NOP10, NHP2 and GAR1, and a telomerase RNA template component (TERC). The telomerase holoenzyme complex is associated with TEP1, SMG6/EST1A and POT1. Interacts with the chaperonin-containing T-complex (TRiC) complex; which mediates the folding of WRAP53/TCAB1. Interacts with COIL. Interacts with SMN1. Interacts with RNF8. Interacts with histone H2AX. In terms of processing, phosphorylated at Ser-61 by ATM in response to DNA damage, promoting its interaction with histone H2AX and localization to sites of DNA double-strand breaks.

It is found in the nucleus. The protein localises to the cajal body. Its subcellular location is the chromosome. It localises to the telomere. Its function is as follows. RNA chaperone that plays a key role in telomere maintenance and RNA localization to Cajal bodies. Specifically recognizes and binds the Cajal body box (CAB box) present in both small Cajal body RNAs (scaRNAs) and telomerase RNA template component (TERC). Essential component of the telomerase holoenzyme complex, a ribonucleoprotein complex essential for the replication of chromosome termini that elongates telomeres in most eukaryotes. In the telomerase holoenzyme complex, required to stimulate the catalytic activity of the complex. Acts by specifically binding the CAB box of the TERC RNA and controlling the folding of the CR4/CR5 region of the TERC RNA, a critical step for telomerase activity. In addition, also controls telomerase holoenzyme complex localization to Cajal body. During S phase, required for delivery of TERC to telomeres during S phase and for telomerase activity. In addition to its role in telomere maintenance, also required for Cajal body formation, probably by mediating localization of scaRNAs to Cajal bodies. Also plays a role in DNA repair: phosphorylated by ATM in response to DNA damage and relocalizes to sites of DNA double-strand breaks to promote the repair of DNA double-strand breaks. Acts by recruiting the ubiquitin ligase RNF8 to DNA breaks and promote both homologous recombination (HR) and non-homologous end joining (NHEJ). The polypeptide is Telomerase Cajal body protein 1 (Rattus norvegicus (Rat)).